A 95-amino-acid polypeptide reads, in one-letter code: Small ribosomal subunit protein bS6 (95 aa).

The protein belongs to the bacterial ribosomal protein bS6 family.

Functionally, binds together with bS18 to 16S ribosomal RNA. This is Small ribosomal subunit protein bS6 from Bacillus pumilus (strain SAFR-032).